The following is a 194-amino-acid chain: ATP-dependent Clp protease proteolytic subunit (194 aa).

The active-site Nucleophile is serine 98. The active site involves histidine 123.

It belongs to the peptidase S14 family. In terms of assembly, fourteen ClpP subunits assemble into 2 heptameric rings which stack back to back to give a disk-like structure with a central cavity, resembling the structure of eukaryotic proteasomes.

Its subcellular location is the cytoplasm. The catalysed reaction is Hydrolysis of proteins to small peptides in the presence of ATP and magnesium. alpha-casein is the usual test substrate. In the absence of ATP, only oligopeptides shorter than five residues are hydrolyzed (such as succinyl-Leu-Tyr-|-NHMec, and Leu-Tyr-Leu-|-Tyr-Trp, in which cleavage of the -Tyr-|-Leu- and -Tyr-|-Trp bonds also occurs).. Functionally, cleaves peptides in various proteins in a process that requires ATP hydrolysis. Has a chymotrypsin-like activity. Plays a major role in the degradation of misfolded proteins. The chain is ATP-dependent Clp protease proteolytic subunit from Syntrophotalea carbinolica (strain DSM 2380 / NBRC 103641 / GraBd1) (Pelobacter carbinolicus).